Reading from the N-terminus, the 870-residue chain is Rho GTPase-activating protein 7 (870 aa).

The PH domain occupies 18–125 (TVFKSGPLFI…WKTALEQALA (108 aa)). Positions 167 to 367 (LALEDIDGSP…VLLEDYGSIF (201 aa)) constitute a Rho-GAP domain. 2 disordered regions span residues 378-432 (STES…SGCT) and 446-465 (DSDIESPRDTNGPRCNSNIR). The span at 407-417 (NEVEPVTDDDN) shows a compositional bias: acidic residues. Positions 569 to 693 (GEDELAIQRL…HQLNQQRQTH (125 aa)) form a coiled coil. The disordered stretch occupies residues 736 to 793 (HEENVLGAEWRNSKGAGSFGVGNSRQPSRKQIPESTNTTDSKISEESGKISVDKLSSI). Residues 777–787 (KISEESGKISV) show a composition bias toward basic and acidic residues.

Acts as a GTPase activator for the Rac-type GTPase by converting it to an inactive GDP-bound state. The protein is Rho GTPase-activating protein 7 (ROPGAP7) of Arabidopsis thaliana (Mouse-ear cress).